A 62-amino-acid chain; its full sequence is Photosystem II reaction center protein Z (62 aa).

Transmembrane regions (helical) follow at residues 8-28 and 41-61; these read AVFALIATSSILLISVPVVFA and FSGTSLWIGLVFLVAILNSLI.

The protein belongs to the PsbZ family. As to quaternary structure, PSII is composed of 1 copy each of membrane proteins PsbA, PsbB, PsbC, PsbD, PsbE, PsbF, PsbH, PsbI, PsbJ, PsbK, PsbL, PsbM, PsbT, PsbY, PsbZ, Psb30/Ycf12, at least 3 peripheral proteins of the oxygen-evolving complex and a large number of cofactors. It forms dimeric complexes.

It is found in the plastid. The protein resides in the chloroplast thylakoid membrane. In terms of biological role, may control the interaction of photosystem II (PSII) cores with the light-harvesting antenna, regulates electron flow through the 2 photosystem reaction centers. PSII is a light-driven water plastoquinone oxidoreductase, using light energy to abstract electrons from H(2)O, generating a proton gradient subsequently used for ATP formation. This is Photosystem II reaction center protein Z from Calycanthus floridus var. glaucus (Eastern sweetshrub).